We begin with the raw amino-acid sequence, 472 residues long: MKQEVILVLDCGATNVRAIAVNRQGKIVARASTPNASDIAMENNTWHQWSLDAILQRFADCCRQINSELTECHIRGIAVTTFGVDGALVDKQGNLLYPIISWKCPRTAAVMDNIERLISAQRLQAISGVGAFSFNTLYKLVWLKENHPQLLERAHAWLFISSLINHRLTGEFTTDITMAGTSQMLDIQQRDFSPQILQATGIPRRLFPRLVEAGEQIGTLQNSAAAMLGLPVGIPVISAGHDTQFALFGAGAEQNEPVLSSGTWEILMVRSAQVDTSLLSQYAGSTCELDSQAGLYNPGMQWLASGVLEWVRKLFWTAETPWQMLIEEARLIAPGADGVKMQCDLLSCQNAGWQGVTLNTTRGHFYRAALEGLTAQLQRNLQMLEKIGHFKASELLLVGGGSRNTLWNQIKANMLDIPLKVLDDAETTVAGAALFGWYGVGEFNSPEEARAQIHYQFRYFYPQTEPEFIEEV.

It belongs to the FGGY kinase family. Requires a divalent metal cation as cofactor.

It catalyses the reaction L-fuculose + ATP = L-fuculose 1-phosphate + ADP + H(+). Its pathway is carbohydrate degradation; L-fucose degradation; L-lactaldehyde and glycerone phosphate from L-fucose: step 2/3. Functionally, catalyzes the phosphorylation of L-fuculose. This is L-fuculokinase from Escherichia coli O157:H7.